Here is a 449-residue protein sequence, read N- to C-terminus: UDP-N-acetylmuramoylalanine--D-glutamate ligase (449 aa).

Residue 113-119 (GTNGKTT) participates in ATP binding.

It belongs to the MurCDEF family.

It is found in the cytoplasm. The enzyme catalyses UDP-N-acetyl-alpha-D-muramoyl-L-alanine + D-glutamate + ATP = UDP-N-acetyl-alpha-D-muramoyl-L-alanyl-D-glutamate + ADP + phosphate + H(+). It participates in cell wall biogenesis; peptidoglycan biosynthesis. In terms of biological role, cell wall formation. Catalyzes the addition of glutamate to the nucleotide precursor UDP-N-acetylmuramoyl-L-alanine (UMA). The sequence is that of UDP-N-acetylmuramoylalanine--D-glutamate ligase from Gloeothece citriformis (strain PCC 7424) (Cyanothece sp. (strain PCC 7424)).